A 910-amino-acid polypeptide reads, in one-letter code: MFSSIARAIIGTSNDRALKAYRRRIAEINGHEAALATLDDAALQGKTSEFRDRLAAGESLDRLLPEAFAVCREAAKRVLGMRHFDVQLIGGMVLHDGKIAEMKTGEGKTLVATLPVYLNALSGKGVHVVTVNDYLAKRDAGWMGQLYNFLGLSVGVIVPGLEDDARRDAYAADITYGTNNEFGFDYLRDNMKYALADMVQRDFNYAIVDEVDSILIDEARTPLIISGPSDEPTELYNQVDGIVKQLVEDPDTYDKDEKFKTVNLTELGSERVEQMLSEAGLLTEGNLYDVFNVSLVHHTNQSLRAHTLFTRDVDYIVKDGQVIIIDEFTGRMMEGRRYSDGLHQALEAKEHVTVERENQTLASITFQNYFRLYPKLSGMTGTAMTEADEFDEIYKLAVVEIPTNVPVARKDGDDEVYRSADEKYEAVAALIEECRQRQQPVLVGTTSIEKSEIISNLLNSRKIPHAVLNARFHEQEAAIVAEAGAPGAVTIATNMAGRGTDIKLGGNLEMRLKTELERLPESARPAREAEIRAEIEAAHDIVHAAGGLFVIGTERHESRRVDNQLRGRSGRQGDPGASRFFLSLEDDLMRIFGSDRMGPMLEKLGLKDGEAIIHPWINKALEKAQKKVEARNFDTRKNLLKYDDVMNNQRKEVYAQRREFMRAESVADVIGEMRADTIAQMVERRIPEKAYAEQWESAELAEDVKRVFGLELPVVDWAAEEGIDESHLRERISEAVEAHMAAKAANFGPDFMRFLEKSILLQTLDHLWKEHLLALDHLRQGIGLRAYGQRDPLNEYKAEAFALFTAMLEDLKEQVSSVLAHVELGSDPATAPAPAFDPASMFTSHPASGPYDGVALAEPQPTLAPEMAVSTYRAESVDPNRPETWASTPRNAACPCGSGKKYKYCHGRVT.

Residues glutamine 87, 105–109 (GEGKT), and aspartate 501 contribute to the ATP site. 4 residues coordinate Zn(2+): cysteine 894, cysteine 896, cysteine 905, and histidine 906.

The protein belongs to the SecA family. As to quaternary structure, monomer and homodimer. Part of the essential Sec protein translocation apparatus which comprises SecA, SecYEG and auxiliary proteins SecDF-YajC and YidC. Requires Zn(2+) as cofactor.

The protein localises to the cell inner membrane. It localises to the cytoplasm. The enzyme catalyses ATP + H2O + cellular proteinSide 1 = ADP + phosphate + cellular proteinSide 2.. Part of the Sec protein translocase complex. Interacts with the SecYEG preprotein conducting channel. Has a central role in coupling the hydrolysis of ATP to the transfer of proteins into and across the cell membrane, serving both as a receptor for the preprotein-SecB complex and as an ATP-driven molecular motor driving the stepwise translocation of polypeptide chains across the membrane. The chain is Protein translocase subunit SecA from Acidiphilium cryptum (strain JF-5).